Here is a 112-residue protein sequence, read N- to C-terminus: Large ribosomal subunit protein P2-B (112 aa).

Positions 89–112 (APAAADAKKEEEEEDDDMGFGLFD) are disordered.

It belongs to the eukaryotic ribosomal protein P1/P2 family. P1 and P2 exist as dimers at the large ribosomal subunit. Post-translationally, phosphorylated.

Plays an important role in the elongation step of protein synthesis. The protein is Large ribosomal subunit protein P2-B of Trypanosoma cruzi.